The primary structure comprises 201 residues: Holliday junction branch migration complex subunit RuvA (201 aa).

The tract at residues 1 to 64 is domain I; that stretch reads MFNSISGILS…EDQMRLFGFP (64 aa). Residues 65-140 form a domain II region; sequence NQAERSLFLD…KLTNLNEVSS (76 aa). A flexible linker region spans residues 140–144; sequence SKGQA. The segment at 145–201 is domain III; that stretch reads SVSCEYEDIVTALTEMGFERKSVIVQVEKIAEEMKAAGSDPLKNEEELFRRSIVALS.

It belongs to the RuvA family. In terms of assembly, homotetramer. Forms an RuvA(8)-RuvB(12)-Holliday junction (HJ) complex. HJ DNA is sandwiched between 2 RuvA tetramers; dsDNA enters through RuvA and exits via RuvB. An RuvB hexamer assembles on each DNA strand where it exits the tetramer. Each RuvB hexamer is contacted by two RuvA subunits (via domain III) on 2 adjacent RuvB subunits; this complex drives branch migration. In the full resolvosome a probable DNA-RuvA(4)-RuvB(12)-RuvC(2) complex forms which resolves the HJ.

It localises to the cytoplasm. In terms of biological role, the RuvA-RuvB-RuvC complex processes Holliday junction (HJ) DNA during genetic recombination and DNA repair, while the RuvA-RuvB complex plays an important role in the rescue of blocked DNA replication forks via replication fork reversal (RFR). RuvA specifically binds to HJ cruciform DNA, conferring on it an open structure. The RuvB hexamer acts as an ATP-dependent pump, pulling dsDNA into and through the RuvAB complex. HJ branch migration allows RuvC to scan DNA until it finds its consensus sequence, where it cleaves and resolves the cruciform DNA. This chain is Holliday junction branch migration complex subunit RuvA, found in Treponema denticola (strain ATCC 35405 / DSM 14222 / CIP 103919 / JCM 8153 / KCTC 15104).